We begin with the raw amino-acid sequence, 496 residues long: Glycerol kinase (496 aa).

Threonine 14 provides a ligand contact to ADP. Positions 14 and 15 each coordinate ATP. Position 14 (threonine 14) interacts with sn-glycerol 3-phosphate. 4 residues coordinate sn-glycerol 3-phosphate: arginine 84, glutamate 85, tyrosine 136, and aspartate 246. Residues arginine 84, glutamate 85, tyrosine 136, aspartate 246, and glutamine 247 each coordinate glycerol. ADP-binding residues include threonine 268 and glycine 313. Residues threonine 268, glycine 313, glutamine 317, and glycine 414 each contribute to the ATP site. ADP contacts are provided by glycine 414 and asparagine 418.

The protein belongs to the FGGY kinase family.

The catalysed reaction is glycerol + ATP = sn-glycerol 3-phosphate + ADP + H(+). It functions in the pathway polyol metabolism; glycerol degradation via glycerol kinase pathway; sn-glycerol 3-phosphate from glycerol: step 1/1. Its activity is regulated as follows. Inhibited by fructose 1,6-bisphosphate (FBP). Its function is as follows. Key enzyme in the regulation of glycerol uptake and metabolism. Catalyzes the phosphorylation of glycerol to yield sn-glycerol 3-phosphate. The chain is Glycerol kinase from Myxococcus xanthus (strain DK1622).